Consider the following 397-residue polypeptide: CCA-adding enzyme (397 aa).

ATP-binding residues include glycine 32 and arginine 35. Residues glycine 32 and arginine 35 each coordinate CTP. 2 residues coordinate Mg(2+): aspartate 45 and aspartate 47. Residues arginine 116, aspartate 159, arginine 162, arginine 165, and arginine 168 each contribute to the ATP site. Residues arginine 116, aspartate 159, arginine 162, arginine 165, and arginine 168 each contribute to the CTP site.

This sequence belongs to the tRNA nucleotidyltransferase/poly(A) polymerase family. Bacterial CCA-adding enzyme type 3 subfamily. Homodimer. The cofactor is Mg(2+).

The catalysed reaction is a tRNA precursor + 2 CTP + ATP = a tRNA with a 3' CCA end + 3 diphosphate. It carries out the reaction a tRNA with a 3' CCA end + 2 CTP + ATP = a tRNA with a 3' CCACCA end + 3 diphosphate. In terms of biological role, catalyzes the addition and repair of the essential 3'-terminal CCA sequence in tRNAs without using a nucleic acid template. Adds these three nucleotides in the order of C, C, and A to the tRNA nucleotide-73, using CTP and ATP as substrates and producing inorganic pyrophosphate. tRNA 3'-terminal CCA addition is required both for tRNA processing and repair. Also involved in tRNA surveillance by mediating tandem CCA addition to generate a CCACCA at the 3' terminus of unstable tRNAs. While stable tRNAs receive only 3'-terminal CCA, unstable tRNAs are marked with CCACCA and rapidly degraded. This Levilactobacillus brevis (strain ATCC 367 / BCRC 12310 / CIP 105137 / JCM 1170 / LMG 11437 / NCIMB 947 / NCTC 947) (Lactobacillus brevis) protein is CCA-adding enzyme.